A 233-amino-acid chain; its full sequence is tRNA (guanine-N(1)-)-methyltransferase (233 aa).

S-adenosyl-L-methionine-binding positions include glycine 121 and 140–145; that span reads IGDYIL.

This sequence belongs to the RNA methyltransferase TrmD family. Homodimer.

Its subcellular location is the cytoplasm. The enzyme catalyses guanosine(37) in tRNA + S-adenosyl-L-methionine = N(1)-methylguanosine(37) in tRNA + S-adenosyl-L-homocysteine + H(+). Specifically methylates guanosine-37 in various tRNAs. This is tRNA (guanine-N(1)-)-methyltransferase from Endomicrobium trichonymphae.